The primary structure comprises 524 residues: Cytochrome P450 4F11 (524 aa).

A helical transmembrane segment spans residues 15 to 37 (AASPWLLLLLVGGSWLLARVLAW). Residues Cys-45 and Cys-260 each carry the 4-hydroxynonenal-conjugated cysteine modification. The residue at position 261 (His-261) is a 4-hydroxynonenal-conjugated histidine. Glu-328 serves as a coordination point for heme. Position 347 is a 4-hydroxynonenal-conjugated histidine (His-347). Residue Cys-354 is modified to 4-hydroxynonenal-conjugated cysteine. At Lys-451 the chain carries 4-hydroxynonenal-conjugated lysine. Cys-468 is a binding site for heme.

The protein belongs to the cytochrome P450 family. Requires heme as cofactor. Post-translationally, 4-hydroxynonenal conjugation impairs substrate binding and the long-chain fatty acid omega-monooxygenase activity. Expressed mainly in human liver, followed by kidney, heart, and skeletal muscle.

It is found in the endoplasmic reticulum membrane. The protein localises to the microsome membrane. The enzyme catalyses an organic molecule + reduced [NADPH--hemoprotein reductase] + O2 = an alcohol + oxidized [NADPH--hemoprotein reductase] + H2O + H(+). It carries out the reaction an omega-methyl-long-chain fatty acid + reduced [NADPH--hemoprotein reductase] + O2 = an omega-hydroxy-long-chain fatty acid + oxidized [NADPH--hemoprotein reductase] + H2O + H(+). The catalysed reaction is dodecanoate + reduced [NADPH--hemoprotein reductase] + O2 = 12-hydroxydodecanoate + oxidized [NADPH--hemoprotein reductase] + H2O + H(+). It catalyses the reaction hexadecanoate + reduced [NADPH--hemoprotein reductase] + O2 = 16-hydroxyhexadecanoate + oxidized [NADPH--hemoprotein reductase] + H2O + H(+). The enzyme catalyses (9Z)-octadecenoate + reduced [NADPH--hemoprotein reductase] + O2 = 18-hydroxy-(9Z)-octadecenoate + oxidized [NADPH--hemoprotein reductase] + H2O + H(+). It carries out the reaction (5Z,8Z,11Z,14Z)-eicosatetraenoate + reduced [NADPH--hemoprotein reductase] + O2 = 20-hydroxy-(5Z,8Z,11Z,14Z)-eicosatetraenoate + oxidized [NADPH--hemoprotein reductase] + H2O + H(+). The catalysed reaction is (4Z,7Z,10Z,13Z,16Z,19Z)-docosahexaenoate + reduced [NADPH--hemoprotein reductase] + O2 = 22-hydroxy-(4Z,7Z,10Z,13Z,16Z,19Z)-docosahexaenoate + oxidized [NADPH--hemoprotein reductase] + H2O + H(+). It catalyses the reaction 8-hydroxy-(5Z,9E,11Z,14Z)-eicosatetraenoate + reduced [NADPH--hemoprotein reductase] + O2 = 8,20-dihydroxy-(5Z,9E,11Z,14Z)-eicosatetraenoate + oxidized [NADPH--hemoprotein reductase] + H2O + H(+). The enzyme catalyses 3-hydroxyhexadecanoate + reduced [NADPH--hemoprotein reductase] + O2 = 3,16-dihydroxyhexadecanoate + oxidized [NADPH--hemoprotein reductase] + H2O + H(+). It carries out the reaction 3-hydroxyoctadecanoate + reduced [NADPH--hemoprotein reductase] + O2 = 3,18-dihydroxyoctadecanoate + oxidized [NADPH--hemoprotein reductase] + H2O + H(+). The catalysed reaction is phylloquinone + reduced [NADPH--hemoprotein reductase] + O2 = omega-hydroxyphylloquinone + oxidized [NADPH--hemoprotein reductase] + H2O + H(+). It catalyses the reaction menaquinone-4 + reduced [NADPH--hemoprotein reductase] + O2 = omega-hydroxymenaquinone-4 + oxidized [NADPH--hemoprotein reductase] + H2O + H(+). The enzyme catalyses 2-hexyl-5-pentylresorcinol + reduced [NADPH--hemoprotein reductase] + O2 = 2-hexyl-5-(5-hydroxypentyl)resorcinol + oxidized [NADPH--hemoprotein reductase] + H2O + H(+). It carries out the reaction 2-hexyl-5-heptylresorcinol + reduced [NADPH--hemoprotein reductase] + O2 = 2-hexyl-5-(7-hydroxyheptyl)resorcinol + oxidized [NADPH--hemoprotein reductase] + H2O + H(+). The catalysed reaction is 12-hydroxy-(5Z,8Z,10E,14Z)-eicosatetraenoate + reduced [NADPH--hemoprotein reductase] + O2 = 12,20-dihydroxy-(5Z,8Z,10E,14Z)-eicosatetraenoate + oxidized [NADPH--hemoprotein reductase] + H2O + H(+). It catalyses the reaction 15-hydroxy-(5Z,8Z,11Z,13E)-eicosatetraenoate + reduced [NADPH--hemoprotein reductase] + O2 = 15,20-dihydroxy-(5Z,8Z,11Z,13E)-eicosatetraenoate + oxidized [NADPH--hemoprotein reductase] + H2O + H(+). It participates in lipid metabolism; arachidonate metabolism. Its pathway is lipid metabolism; oxylipin biosynthesis. It functions in the pathway cofactor degradation; phylloquinone degradation. The protein operates within xenobiotic degradation. Inhibition of the long-chain fatty acid omega-monooxygenase activity by 4-hydroxynonenal (4-HNE) conjugation. In terms of biological role, a cytochrome P450 monooxygenase involved in the metabolism of various endogenous substrates, including fatty acids and their oxygenated derivatives (oxylipins). Mechanistically, uses molecular oxygen inserting one oxygen atom into a substrate, and reducing the second into a water molecule, with two electrons provided by NADPH via cytochrome P450 reductase (CPR; NADPH-ferrihemoprotein reductase). Catalyzes with high efficiency the oxidation of the terminal carbon (omega-oxidation) of 3-hydroxy fatty acids, such as 3-hydroxyhexadecanoic and 3-hydroxyoctadecanoic acids, likely participating in the biosynthesis of long-chain 3-hydroxydicarboxylic acids. Omega-hydroxylates and inactivates phylloquinone (vitamin K1), and menaquinone-4 (MK-4, a form of vitamin K2), both acting as cofactors in blood coagulation. Metabolizes with low efficiciency fatty acids, including (5Z,8Z,11Z,14Z)-eicosatetraenoic acid (arachidonate) and its oxygenated metabolite 8-hydroxyeicosatetraenoic acid (8-HETE). Catalyzes N- and O-demethylation of drugs such as erythromycin, benzphetamine, ethylmorphine, chlorpromazine, imipramine and verapamil. Catalyzes the oxidation of dialkylresorcinol 2. The chain is Cytochrome P450 4F11 from Homo sapiens (Human).